Consider the following 353-residue polypeptide: UDP-3-O-acylglucosamine N-acyltransferase (353 aa).

H242 functions as the Proton acceptor in the catalytic mechanism.

The protein belongs to the transferase hexapeptide repeat family. LpxD subfamily. As to quaternary structure, homotrimer.

It catalyses the reaction a UDP-3-O-[(3R)-3-hydroxyacyl]-alpha-D-glucosamine + a (3R)-hydroxyacyl-[ACP] = a UDP-2-N,3-O-bis[(3R)-3-hydroxyacyl]-alpha-D-glucosamine + holo-[ACP] + H(+). It participates in bacterial outer membrane biogenesis; LPS lipid A biosynthesis. In terms of biological role, catalyzes the N-acylation of UDP-3-O-acylglucosamine using 3-hydroxyacyl-ACP as the acyl donor. Is involved in the biosynthesis of lipid A, a phosphorylated glycolipid that anchors the lipopolysaccharide to the outer membrane of the cell. The protein is UDP-3-O-acylglucosamine N-acyltransferase of Pseudomonas paraeruginosa (strain DSM 24068 / PA7) (Pseudomonas aeruginosa (strain PA7)).